The chain runs to 351 residues: MVEPYSQQKQIQQVVYRILDANLDRAREGLRIIEEWCRFGLNSGQLAGECKYLRQEVAVWHTEELRAARDTAGDPGTDLSHPQEEQRSSIKALLQANFCRVEEALRVLEEYGKLYHPKMGQACKQMRYRVYSLETNLMGHQRHQLLRRSRLYLVTSPSESLLPTVEAALKGGLTLLQYRDKDTDDFVRLELATKLRQLCHSYGALFIINDRVDLALAVDADGVHLGQQDMPIATARQLLGPQRLIGRSTTNADEMQKAIAEGADYIGVGPVYETPTKIGKAAAGLGYVSYAAQHSSVPWFAIGGIDANNINDVIDAGAERVAVVRSLMQAEQPTLVTQYLISQLNRIKPES.

Residues 1-129 are unknown; that stretch reads MVEPYSQQKQ…GQACKQMRYR (129 aa). The interval 130-351 is thiamine-phosphate synthase; sequence VYSLETNLMG…SQLNRIKPES (222 aa). 4-amino-2-methyl-5-(diphosphooxymethyl)pyrimidine contacts are provided by residues 177–181 and asparagine 209; that span reads QYRDK. Positions 210 and 229 each coordinate Mg(2+). Serine 248 contributes to the 4-amino-2-methyl-5-(diphosphooxymethyl)pyrimidine binding site. 274-276 provides a ligand contact to 2-[(2R,5Z)-2-carboxy-4-methylthiazol-5(2H)-ylidene]ethyl phosphate; the sequence is TPT. Lysine 277 lines the 4-amino-2-methyl-5-(diphosphooxymethyl)pyrimidine pocket. Glycine 304 contacts 2-[(2R,5Z)-2-carboxy-4-methylthiazol-5(2H)-ylidene]ethyl phosphate.

It belongs to the thiamine-phosphate synthase family. Mg(2+) serves as cofactor.

It catalyses the reaction 2-[(2R,5Z)-2-carboxy-4-methylthiazol-5(2H)-ylidene]ethyl phosphate + 4-amino-2-methyl-5-(diphosphooxymethyl)pyrimidine + 2 H(+) = thiamine phosphate + CO2 + diphosphate. The enzyme catalyses 2-(2-carboxy-4-methylthiazol-5-yl)ethyl phosphate + 4-amino-2-methyl-5-(diphosphooxymethyl)pyrimidine + 2 H(+) = thiamine phosphate + CO2 + diphosphate. It carries out the reaction 4-methyl-5-(2-phosphooxyethyl)-thiazole + 4-amino-2-methyl-5-(diphosphooxymethyl)pyrimidine + H(+) = thiamine phosphate + diphosphate. Its pathway is cofactor biosynthesis; thiamine diphosphate biosynthesis; thiamine phosphate from 4-amino-2-methyl-5-diphosphomethylpyrimidine and 4-methyl-5-(2-phosphoethyl)-thiazole: step 1/1. Functionally, condenses 4-methyl-5-(beta-hydroxyethyl)thiazole monophosphate (THZ-P) and 2-methyl-4-amino-5-hydroxymethyl pyrimidine pyrophosphate (HMP-PP) to form thiamine monophosphate (TMP). This chain is Thiamine-phosphate synthase, found in Nostoc sp. (strain PCC 7120 / SAG 25.82 / UTEX 2576).